The primary structure comprises 191 residues: UPF0312 protein PA0423 (191 aa).

The signal sequence occupies residues 1–23 (MLKKTLAALALGSALFTAGQAMA).

This sequence belongs to the UPF0312 family. Type 1 subfamily.

It is found in the periplasm. This is UPF0312 protein PA0423 from Pseudomonas aeruginosa (strain ATCC 15692 / DSM 22644 / CIP 104116 / JCM 14847 / LMG 12228 / 1C / PRS 101 / PAO1).